A 166-amino-acid polypeptide reads, in one-letter code: KH homology domain-containing protein 1A (166 aa).

Positions 19–78 (PLVFDMEEDKEDYIFGPHDEYLHTLEVHSNTLIQLERWFTPTGQTRVTVVGPLKARLWVM) constitute a KH; atypical domain.

Belongs to the KHDC1 family.

It is found in the cytoplasm. Its function is as follows. Has pro-apoptotic activity. The sequence is that of KH homology domain-containing protein 1A (Khdc1a) from Mus musculus (Mouse).